The following is a 462-amino-acid chain: Syringate O-demethylase (462 aa).

Belongs to the GcvT family.

It catalyses the reaction syringate + (6S)-5,6,7,8-tetrahydrofolate = 3-O-methylgallate + (6S)-5-methyl-5,6,7,8-tetrahydrofolate. The protein operates within secondary metabolite metabolism; lignin degradation. Involved in the catabolism of syringate. Catalyzes the conversion of syringate to 3-O-methylgallate (3MGA) in the presence of tetrahydrofolate. Has weak activity with vanillate and 3-O-methylgallate. The chain is Syringate O-demethylase from Sphingobium sp. (strain NBRC 103272 / SYK-6).